The chain runs to 563 residues: NAD(P)H-quinone oxidoreductase chain 4 (563 aa).

The next 15 helical transmembrane spans lie at 25–45 (FPWLSLSILFPIVGAFLVPFI), 56–76 (WFALGIALVTFVITVAAYLYG), 90–110 (VSWLPDLGLTWAVGADGISMP), 111–131 (LILLTSFITALAVLAAWPVTF), 133–153 (PKLFFFLILAMDGGQIAVFAV), 157–177 (LLFFLAWELELLPVYLLLAIW), 189–209 (FIIYTAGSSLFILLVALAMGF), 230–250 (GFQLLCYAGLLIAFGVKLPIV), 264–284 (TAPVHMLLAGILLKMGGYALM), 298–318 (FAPLLIVLGVVNIIYAALTSF), 335–355 (MGFVLIGIGSFSALGTSGAML), 356–376 (QMISHGLIGASLFFLVGATYD), 397–417 (FALWTVCALASLALPGMSGFV), 438–458 (IVIAGLAAIGVILTPIYLLSM), and 485–505 (VYIISCLLVPIIGIGLYPRLM).

The protein belongs to the complex I subunit 4 family.

It is found in the cellular thylakoid membrane. The enzyme catalyses a plastoquinone + NADH + (n+1) H(+)(in) = a plastoquinol + NAD(+) + n H(+)(out). The catalysed reaction is a plastoquinone + NADPH + (n+1) H(+)(in) = a plastoquinol + NADP(+) + n H(+)(out). In terms of biological role, NDH-1 shuttles electrons from NAD(P)H, via FMN and iron-sulfur (Fe-S) centers, to quinones in the respiratory chain. The immediate electron acceptor for the enzyme in this species is believed to be plastoquinone. Couples the redox reaction to proton translocation (for every two electrons transferred, four hydrogen ions are translocated across the cytoplasmic membrane), and thus conserves the redox energy in a proton gradient. In Prochlorococcus marinus (strain MIT 9303), this protein is NAD(P)H-quinone oxidoreductase chain 4.